The primary structure comprises 130 residues: MSSNSDNTECFGGVNYAEGMRKRKRNPVRNSTFQEYLDARNARYPRSGSTSDSDEDYTTRSKYESDVSEFKKMMDLETLPPPKAEPQAQKAEPDAAKEEPVSTTSYILNEWVAPMIGHFLAMCMYELLFK.

Residues M1 to P100 are disordered. Composition is skewed to basic and acidic residues over residues Y57–D75 and A91–P100.

This is an uncharacterized protein from Equine herpesvirus 1 (strain Ab4p) (EHV-1).